The following is a 757-amino-acid chain: MGIFNKVTKTFQWGDQTVVMETGEIARQASGAVLVSIDDTVVLATVVASRSIKPGQDFFPLTVDYIEKTYAAGKIPGSFFKREAKPSEHETLTSRLIDRPLRPLFPQGFFNEVHLVIHTLSLNPEVDADIAALIASSAALALSGIPFNGPIGAARVGYIQGEYRLNPGPTARKSSQLDLVVAGTEAAVLMVESEAQQLSEEIMLGAVVFGHQQGKVAIDAIHELVHAAGKPVWQWEAPARDEALIARVAALADDKLRAAYQIRNKQARTEACRAAYAAVLAQLQADGVECDTVKAEGLLFDIEAGIVRSQILAGEPRIDGRDTRTVRPIEIRAGVLPRAHGSALFTRGETQALAVATLGTERDAQRIDALAGEYDDRFMLHYNMPPFATGEVGRMGSTKRREIGHGRLAKRALVAVLPTKEEFPYTMRVVSEITESNGSSSMASVCGGCLSLMDAGVPMKAHVAGIAMGLIKDGNRFAVLTDILGDEDHLGDMDFKVAGTTAGITALQMDIKIQGITREIMQVALAQAKEARMHILGKMQQAIGQAKTEVSNFAPKLYTMKINAEKIRDVIGKGGAVIRALTEETGCQINIEEDGTITIAATDAAKADIAKRRIEQITAEIEIGKIYEGPVTKLLDFGALINLLPGKDGLLHISQIAHERVERVSDYLSEGQIVRVKVMEADERGRVKLSMKVLAERPAPGSDRFGTGSERPAPGSDRPALAEREPRREMRDHGHPPSEQQQQQSPPADTGSGQRVG.

Residues Asp488 and Asp494 each coordinate Mg(2+). A KH domain is found at 555–614; it reads PKLYTMKINAEKIRDVIGKGGAVIRALTEETGCQINIEEDGTITIAATDAAKADIAKRRI. The region spanning 624–692 is the S1 motif domain; that stretch reads GKIYEGPVTK…ERGRVKLSMK (69 aa). Positions 693–757 are disordered; it reads VLAERPAPGS…ADTGSGQRVG (65 aa). Residues 720 to 736 are compositionally biased toward basic and acidic residues; that stretch reads ALAEREPRREMRDHGHP. Positions 737–747 are enriched in low complexity; it reads PSEQQQQQSPP.

The protein belongs to the polyribonucleotide nucleotidyltransferase family. Requires Mg(2+) as cofactor.

Its subcellular location is the cytoplasm. The catalysed reaction is RNA(n+1) + phosphate = RNA(n) + a ribonucleoside 5'-diphosphate. Involved in mRNA degradation. Catalyzes the phosphorolysis of single-stranded polyribonucleotides processively in the 3'- to 5'-direction. This chain is Polyribonucleotide nucleotidyltransferase, found in Verminephrobacter eiseniae (strain EF01-2).